Consider the following 333-residue polypeptide: Ferrochelatase (333 aa).

Residues H202 and E284 each coordinate Fe cation.

This sequence belongs to the ferrochelatase family.

It is found in the cytoplasm. It catalyses the reaction heme b + 2 H(+) = protoporphyrin IX + Fe(2+). The protein operates within porphyrin-containing compound metabolism; protoheme biosynthesis; protoheme from protoporphyrin-IX: step 1/1. Functionally, catalyzes the ferrous insertion into protoporphyrin IX. In Francisella tularensis subsp. tularensis (strain FSC 198), this protein is Ferrochelatase.